Reading from the N-terminus, the 518-residue chain is Protein translocase subunit SecD (518 aa).

The next 6 membrane-spanning stretches (helical) occupy residues 9–29 (IFLSIICTVFAVICALPNFMQ), 361–381 (LIGFIAVCIFMVWSYGVLGLF), 384–404 (IALSLALLYILALLSLFQATL), 406–426 (LPGIAGIILTMGMAVDANVLI), 452–474 (FATILDSNLTTLIVAFLLYIFGV), and 486–506 (IGIISSMFSAIIITKLLIDIW).

The protein belongs to the SecD/SecF family. SecD subfamily. As to quaternary structure, forms a complex with SecF. Part of the essential Sec protein translocation apparatus which comprises SecA, SecYEG and auxiliary proteins SecDF-YajC and YidC.

It is found in the cell inner membrane. Functionally, part of the Sec protein translocase complex. Interacts with the SecYEG preprotein conducting channel. SecDF uses the proton motive force (PMF) to complete protein translocation after the ATP-dependent function of SecA. This is Protein translocase subunit SecD from Rickettsia felis (strain ATCC VR-1525 / URRWXCal2) (Rickettsia azadi).